The chain runs to 294 residues: 4-hydroxy-tetrahydrodipicolinate synthase (294 aa).

T47 provides a ligand contact to pyruvate. Y135 acts as the Proton donor/acceptor in catalysis. The active-site Schiff-base intermediate with substrate is K163. Residue V205 participates in pyruvate binding.

This sequence belongs to the DapA family. As to quaternary structure, homotetramer; dimer of dimers.

Its subcellular location is the cytoplasm. It carries out the reaction L-aspartate 4-semialdehyde + pyruvate = (2S,4S)-4-hydroxy-2,3,4,5-tetrahydrodipicolinate + H2O + H(+). It participates in amino-acid biosynthesis; L-lysine biosynthesis via DAP pathway; (S)-tetrahydrodipicolinate from L-aspartate: step 3/4. Catalyzes the condensation of (S)-aspartate-beta-semialdehyde [(S)-ASA] and pyruvate to 4-hydroxy-tetrahydrodipicolinate (HTPA). In Rickettsia bellii (strain RML369-C), this protein is 4-hydroxy-tetrahydrodipicolinate synthase.